The following is a 165-amino-acid chain: Putative inactive neutral ceramidase B (165 aa).

Belongs to the neutral ceramidase family. Ubiquitous. Expression is reduced with increasing age and in late-onset Alzheimer disease (LOAD) patients. This reduction is even more pronounced in patients with an affected mother.

The polypeptide is Putative inactive neutral ceramidase B (Homo sapiens (Human)).